The following is a 38-amino-acid chain: Putative defensin-like protein 105 (38 aa).

3 cysteine pairs are disulfide-bonded: cysteine 5-cysteine 27, cysteine 13-cysteine 33, and cysteine 17-cysteine 34.

This sequence belongs to the DEFL family.

The chain is Putative defensin-like protein 105 from Arabidopsis thaliana (Mouse-ear cress).